Reading from the N-terminus, the 640-residue chain is Threonine--tRNA ligase (640 aa).

Residues 1–59 enclose the TGS domain; sequence MKIKVKLPDGKEKEYDRGITPAEIAKELGVKKAIGAVVNGELWDLKRPIENDCELRLVT. Residues 240–531 are catalytic; sequence DHRKLGPHLE…LIEHFAGAFP (292 aa). Zn(2+) contacts are provided by cysteine 332, histidine 383, and histidine 508.

It belongs to the class-II aminoacyl-tRNA synthetase family. In terms of assembly, homodimer. Zn(2+) is required as a cofactor.

Its subcellular location is the cytoplasm. The enzyme catalyses tRNA(Thr) + L-threonine + ATP = L-threonyl-tRNA(Thr) + AMP + diphosphate + H(+). Its function is as follows. Catalyzes the attachment of threonine to tRNA(Thr) in a two-step reaction: L-threonine is first activated by ATP to form Thr-AMP and then transferred to the acceptor end of tRNA(Thr). Also edits incorrectly charged L-seryl-tRNA(Thr). This chain is Threonine--tRNA ligase, found in Thermotoga petrophila (strain ATCC BAA-488 / DSM 13995 / JCM 10881 / RKU-1).